Consider the following 434-residue polypeptide: Glucose-1-phosphate adenylyltransferase (434 aa).

Alpha-D-glucose 1-phosphate-binding positions include Y112, G178, 193–194, and S211; that span reads EK.

The protein belongs to the bacterial/plant glucose-1-phosphate adenylyltransferase family. As to quaternary structure, homotetramer.

It carries out the reaction alpha-D-glucose 1-phosphate + ATP + H(+) = ADP-alpha-D-glucose + diphosphate. It functions in the pathway glycan biosynthesis; glycogen biosynthesis. In terms of biological role, involved in the biosynthesis of ADP-glucose, a building block required for the elongation reactions to produce glycogen. Catalyzes the reaction between ATP and alpha-D-glucose 1-phosphate (G1P) to produce pyrophosphate and ADP-Glc. In Mannheimia succiniciproducens (strain KCTC 0769BP / MBEL55E), this protein is Glucose-1-phosphate adenylyltransferase.